The following is a 400-amino-acid chain: Coenzyme A biosynthesis bifunctional protein CoaBC (400 aa).

The segment at 1-190 (MKLNGKHIVV…SQKQDLQGLN (190 aa)) is phosphopantothenoylcysteine decarboxylase. Cysteine 158 acts as the Proton donor in catalysis. The interval 191–400 (VSITAGPTRE…EIIERYQKTL (210 aa)) is phosphopantothenate--cysteine ligase. Residues 273–275 (GCA), aspartate 279, lysine 289, 305–308 (PDII), phenylalanine 324, lysine 338, and lysine 342 contribute to the CTP site.

In the N-terminal section; belongs to the HFCD (homo-oligomeric flavin containing Cys decarboxylase) superfamily. This sequence in the C-terminal section; belongs to the PPC synthetase family. It depends on Mg(2+) as a cofactor. Requires FMN as cofactor.

The enzyme catalyses N-[(R)-4-phosphopantothenoyl]-L-cysteine + H(+) = (R)-4'-phosphopantetheine + CO2. The catalysed reaction is (R)-4'-phosphopantothenate + L-cysteine + CTP = N-[(R)-4-phosphopantothenoyl]-L-cysteine + CMP + diphosphate + H(+). It participates in cofactor biosynthesis; coenzyme A biosynthesis; CoA from (R)-pantothenate: step 2/5. Its pathway is cofactor biosynthesis; coenzyme A biosynthesis; CoA from (R)-pantothenate: step 3/5. Catalyzes two sequential steps in the biosynthesis of coenzyme A. In the first step cysteine is conjugated to 4'-phosphopantothenate to form 4-phosphopantothenoylcysteine. In the second step the latter compound is decarboxylated to form 4'-phosphopantotheine. This is Coenzyme A biosynthesis bifunctional protein CoaBC from Haemophilus influenzae (strain ATCC 51907 / DSM 11121 / KW20 / Rd).